The primary structure comprises 837 residues: Translation initiation factor IF-2 (837 aa).

Positions 97-139 (AEEIEAEQRRELEEQRAAEEAARLKAEQEARERAEEEARRQAE) are enriched in basic and acidic residues. A disordered region spans residues 97–253 (AEEIEAEQRR…QHGFQSPTGP (157 aa)). Low complexity predominate over residues 140–175 (AAKAQTAETAAPAAAESASSAEPAQVVAAVEAAAPA). Positions 176–197 (PERKKEEPRRVEKPRSDDDERR) are enriched in basic and acidic residues. Positions 198–208 (DRKHAQHRPSL) are enriched in basic residues. Residues 219–229 (RSGEDEADGFR) show a composition bias toward basic and acidic residues. Over residues 230–244 (RGGRGGKSKLKKRNQ) the composition is skewed to basic residues. One can recognise a tr-type G domain in the interval 337-504 (ARAPVVTVMG…AVLLQAEILE (168 aa)). A G1 region spans residues 346–353 (GHVDHGKT). Position 346–353 (346–353 (GHVDHGKT)) interacts with GTP. The segment at 371 to 375 (GITQH) is G2. The tract at residues 392-395 (DTPG) is G3. GTP contacts are provided by residues 392–396 (DTPGH) and 446–449 (NKID). The interval 446-449 (NKID) is G4. The segment at 482 to 484 (SAK) is G5.

Belongs to the TRAFAC class translation factor GTPase superfamily. Classic translation factor GTPase family. IF-2 subfamily.

The protein resides in the cytoplasm. In terms of biological role, one of the essential components for the initiation of protein synthesis. Protects formylmethionyl-tRNA from spontaneous hydrolysis and promotes its binding to the 30S ribosomal subunits. Also involved in the hydrolysis of GTP during the formation of the 70S ribosomal complex. This chain is Translation initiation factor IF-2, found in Stutzerimonas stutzeri (strain A1501) (Pseudomonas stutzeri).